A 48-amino-acid chain; its full sequence is Small, acid-soluble spore protein N (48 aa).

The tract at residues Met-1–Glu-48 is disordered. Basic and acidic residues predominate over residues Asn-27–Asn-37.

Belongs to the SspN family.

It is found in the spore core. The chain is Small, acid-soluble spore protein N from Bacillus velezensis (strain DSM 23117 / BGSC 10A6 / LMG 26770 / FZB42) (Bacillus amyloliquefaciens subsp. plantarum).